A 197-amino-acid polypeptide reads, in one-letter code: Holliday junction branch migration complex subunit RuvA (197 aa).

Positions 1-64 (MIASVRGVVQ…EDMLALFGFS (64 aa)) are domain I. The tract at residues 65-143 (SPAQRALFEL…VATISPQLST (79 aa)) is domain II. The tract at residues 144-153 (NPGLLALNTE) is flexible linker. A domain III region spans residues 153–197 (ELIDILTSLGYSTTEAQAALNALPADAPADTEERLRLALQYFGGV).

It belongs to the RuvA family. Homotetramer. Forms an RuvA(8)-RuvB(12)-Holliday junction (HJ) complex. HJ DNA is sandwiched between 2 RuvA tetramers; dsDNA enters through RuvA and exits via RuvB. An RuvB hexamer assembles on each DNA strand where it exits the tetramer. Each RuvB hexamer is contacted by two RuvA subunits (via domain III) on 2 adjacent RuvB subunits; this complex drives branch migration. In the full resolvosome a probable DNA-RuvA(4)-RuvB(12)-RuvC(2) complex forms which resolves the HJ.

The protein resides in the cytoplasm. In terms of biological role, the RuvA-RuvB-RuvC complex processes Holliday junction (HJ) DNA during genetic recombination and DNA repair, while the RuvA-RuvB complex plays an important role in the rescue of blocked DNA replication forks via replication fork reversal (RFR). RuvA specifically binds to HJ cruciform DNA, conferring on it an open structure. The RuvB hexamer acts as an ATP-dependent pump, pulling dsDNA into and through the RuvAB complex. HJ branch migration allows RuvC to scan DNA until it finds its consensus sequence, where it cleaves and resolves the cruciform DNA. The polypeptide is Holliday junction branch migration complex subunit RuvA (Herpetosiphon aurantiacus (strain ATCC 23779 / DSM 785 / 114-95)).